The chain runs to 279 residues: Ribosomal RNA small subunit methyltransferase A (279 aa).

S-adenosyl-L-methionine contacts are provided by N25, L27, G52, E73, D98, and N120.

It belongs to the class I-like SAM-binding methyltransferase superfamily. rRNA adenine N(6)-methyltransferase family. RsmA subfamily.

The protein resides in the cytoplasm. The enzyme catalyses adenosine(1518)/adenosine(1519) in 16S rRNA + 4 S-adenosyl-L-methionine = N(6)-dimethyladenosine(1518)/N(6)-dimethyladenosine(1519) in 16S rRNA + 4 S-adenosyl-L-homocysteine + 4 H(+). Its function is as follows. Specifically dimethylates two adjacent adenosines (A1518 and A1519) in the loop of a conserved hairpin near the 3'-end of 16S rRNA in the 30S particle. May play a critical role in biogenesis of 30S subunits. This chain is Ribosomal RNA small subunit methyltransferase A, found in Magnetococcus marinus (strain ATCC BAA-1437 / JCM 17883 / MC-1).